The following is a 758-amino-acid chain: MVVTRSGLSRTRLQESSQQKRSAPRRIGTHLESTKESGSDGSTAESQPAEKQHSRSSSRTTGPAEIIVLISDDEASETESHTSGVTSVLEDQEPIVRVTRKRQIVIASTSKSTVRKRQKVAPQHASADEVVVSEAESHVSGVSMVVPSTERSSRNKANSQRDSSQESQSGTVSDAELSCSGISSLEILPRTTARNVKKKLQFPAEKNDTKITPGNKKQIVGMSVCSEDSDATQLSARPLSQRNMPNVSDSETYNSDFDDSSPRNSGKKLTAQNHQNLHIQEEKRANVVSLTEVRKENCKSLDEEDLKITEEKVINEKDSQRSLSEAQDTSLQQSVSQNHSSTPNKKPTFQLSSPDRKALMKSLEHKFAVVNVERWNDKRGGSGKKSDLAQLGGGGGGGDDNEPTGAGISDDKSSQSGVPLECDTKPCKSELSMTQDTTDSPVLLFLSSDESQQSDSSENERDTLCSVENNGQKEASAEDLEDAACDSALFVIDKTPGLSADKNFYLEDKAPSEVAIEEEKEEEEKEEENSEEDSSDSDENKDESSDEEDLLSNTKSKLLKLTSSSIDPGLNIKQLGGLYINFNVDKLQPHKETLTQIKEKKKNELLQKAVITPDFEKKHCVPPYSESKHRLQKQRRKERQKTAGNGWFGMKAPELTDELKNDLRALKMRAGMDPKRFYKKNDRDGFPKYFQVGTIVDNPADFYHSRIPKKQRKKTIVEELLADSEFRRFNRRKYSEIMAEKAANAEGKKFKKKKKFRN.

Residues M1 to R21 show a composition bias toward polar residues. The interval M1–E176 is disordered. Residues S17, S133, S137, and S140 each carry the phosphoserine modification. Residues D128–S143 are compositionally biased toward low complexity. The span at N155–V172 shows a compositional bias: polar residues. Phosphoserine is present on residues S173 and S183. Residue K210 forms a Glycyl lysine isopeptide (Lys-Gly) (interchain with G-Cter in SUMO2) linkage. 4 positions are modified to phosphoserine: S229, S240, S248, and S255. The span at A231–S255 shows a compositional bias: polar residues. 4 disordered regions span residues A231–L277, K312–S353, D377–L480, and D501–S552. A Glycyl lysine isopeptide (Lys-Gly) (interchain with G-Cter in SUMO2) cross-link involves residue K317. The span at R321–S353 shows a compositional bias: polar residues. Residues S324 and S330 each carry the phosphoserine modification. Residues K345 and K384 each participate in a glycyl lysine isopeptide (Lys-Gly) (interchain with G-Cter in SUMO2) cross-link. The span at D377 to D387 shows a compositional bias: basic and acidic residues. Over residues L431–S440 the composition is skewed to polar residues. The span at S447–S456 shows a compositional bias: low complexity. Residues S476 and S512 each carry the phosphoserine modification. Positions S512–K541 form a coiled coil. Residues A515 to L550 are compositionally biased toward acidic residues. The interval L550–Q607 is tdBR region; mediates interaction with DNTT. Residues K560, K586, and K608 each participate in a glycyl lysine isopeptide (Lys-Gly) (interchain with G-Cter in SUMO2) cross-link. T612 is modified (phosphothreonine). The disordered stretch occupies residues V621–W647. Residue K628 forms a Glycyl lysine isopeptide (Lys-Gly) (interchain with G-Cter in SUMO2) linkage. Residues R630–R639 are compositionally biased toward basic residues. Glycyl lysine isopeptide (Lys-Gly) (interchain with G-Cter in SUMO2) cross-links involve residues K651, K660, K688, and K733.

Forms a ternary complex with DNTT and core histone; interaction with PCNA releases DNTT and H2A/H2B histones from this ternary complex. Interacts with ESR1, ESR2, PPARG and RXRA. Part of the small subunit (SSU) processome, composed of more than 70 proteins and the RNA chaperone small nucleolar RNA (snoRNA) U3.

The protein localises to the nucleus. The protein resides in the nucleolus. Functionally, regulates the transcriptional activity of DNTT and ESR1. May function as a chromatin remodeling protein. Part of the small subunit (SSU) processome, first precursor of the small eukaryotic ribosomal subunit. During the assembly of the SSU processome in the nucleolus, many ribosome biogenesis factors, an RNA chaperone and ribosomal proteins associate with the nascent pre-rRNA and work in concert to generate RNA folding, modifications, rearrangements and cleavage as well as targeted degradation of pre-ribosomal RNA by the RNA exosome. The chain is Deoxynucleotidyltransferase terminal-interacting protein 2 (Dnttip2) from Mus musculus (Mouse).